Here is a 353-residue protein sequence, read N- to C-terminus: Anthranilate phosphoribosyltransferase (353 aa).

5-phospho-alpha-D-ribose 1-diphosphate contacts are provided by residues Gly-79, 82–83, Thr-87, 89–92, 107–115, and Ser-119; these read GD, NIST, and KHGNHSFTS. Gly-79 is an anthranilate binding site. Ser-91 lines the Mg(2+) pocket. Asn-110 is a binding site for anthranilate. Arg-165 is a binding site for anthranilate. Residues Asp-223 and Glu-224 each coordinate Mg(2+).

Belongs to the anthranilate phosphoribosyltransferase family. As to quaternary structure, homodimer. Requires Mg(2+) as cofactor.

It catalyses the reaction N-(5-phospho-beta-D-ribosyl)anthranilate + diphosphate = 5-phospho-alpha-D-ribose 1-diphosphate + anthranilate. The protein operates within amino-acid biosynthesis; L-tryptophan biosynthesis; L-tryptophan from chorismate: step 2/5. Functionally, catalyzes the transfer of the phosphoribosyl group of 5-phosphorylribose-1-pyrophosphate (PRPP) to anthranilate to yield N-(5'-phosphoribosyl)-anthranilate (PRA). The chain is Anthranilate phosphoribosyltransferase from Methanococcoides burtonii (strain DSM 6242 / NBRC 107633 / OCM 468 / ACE-M).